A 372-amino-acid chain; its full sequence is Transaldolase (372 aa).

The active-site Schiff-base intermediate with substrate is Lys140.

This sequence belongs to the transaldolase family. Type 2 subfamily.

Its subcellular location is the cytoplasm. It catalyses the reaction D-sedoheptulose 7-phosphate + D-glyceraldehyde 3-phosphate = D-erythrose 4-phosphate + beta-D-fructose 6-phosphate. The protein operates within carbohydrate degradation; pentose phosphate pathway; D-glyceraldehyde 3-phosphate and beta-D-fructose 6-phosphate from D-ribose 5-phosphate and D-xylulose 5-phosphate (non-oxidative stage): step 2/3. Functionally, transaldolase is important for the balance of metabolites in the pentose-phosphate pathway. The chain is Transaldolase from Acidothermus cellulolyticus (strain ATCC 43068 / DSM 8971 / 11B).